A 755-amino-acid polypeptide reads, in one-letter code: MESTPFNRRQWTSLSLRVTAKELSLVNKNKSSTIVEIFSKYQKAAEEANMERKKNNTESLPQHFRRGTLSVLKKKWENPVAGAESHTDSLPNSSSDGGHTADHPPAEVTAKAAPGARADREEHTQPRSRFGSRPEAVTQCRYPRSEDSHDFKAQATESQNMENCLGDSRHEAEKPEMSENTETSGKIEKYNVPLNRLKMMFEKGEHSQNKSPWTQGRNAGGRRLSENSCSLDDLEIGAGHLSSSAFNSEKNESKRNLELPRLSETSIKDRMAKYQAAVSKQSSPASYASELKPSESKTHKWEQKENVPPGPEACSIHQEGSKVSATENSLVAHPVPAEDDTCNSQGRSEAQQPIYTKPLSPDARTSSLPESSPSKTAKKFQAPARESCVECQKTVYPMERLLANQQVFHISCFRCSYCNNKLSLGTYASLHGRIYCKPHFNQLFKSKGNYDEGFGHKQHKDLWASKGENEETLGRPAQPPSAGETPHSPGVEDAPIAKVGVLAASMEAKASSQREREENKPAETKKLRIAWPPPAEQGSSGSAPEEGFKVSKPKWPPEDEVCKTEAPEDVDLDLKKLRRSSSLKERSRPFTVAASFRTSSVKSPKPLSPSLRKGWSEPEPEQSEEFGGGTVTQTESPRPSREKESVGKSRWQSEEAEAEAEEAPRGRDGRSFELESESFIGNGASIAEDDVAPAQRSPLEPESPGWPGFGDTTTAKEFNQKSQDVGFWEGEVVRELSVEEQIKRNRYYDEDEDEE.

The residue at position 1 (Met-1) is an N-acetylmethionine. Phosphoserine is present on Ser-15. Over residues 43 to 56 (KAAEEANMERKKNN) the composition is skewed to basic and acidic residues. Positions 43 to 151 (KAAEEANMER…YPRSEDSHDF (109 aa)) are disordered. Polar residues predominate over residues 88–97 (DSLPNSSSDG). At Ser-132 the chain carries Phosphoserine. A Required for interaction with NPC1L1 motif is present at residues 164-166 (CLG). Basic and acidic residues-rich tracts occupy residues 168–177 (SRHEAEKPEM) and 199–208 (MMFEKGEHSQ). Positions 168–226 (SRHEAEKPEMSENTETSGKIEKYNVPLNRLKMMFEKGEHSQNKSPWTQGRNAGGRRLSE) are disordered. Phosphoserine occurs at positions 225, 230, and 242. The tract at residues 241 to 379 (LSSSAFNSEK…ESSPSKTAKK (139 aa)) is disordered. Residues 249–258 (EKNESKRNLE) show a composition bias toward basic and acidic residues. At Ser-263 the chain carries Phosphoserine. Residues 292–305 (KPSESKTHKWEQKE) show a composition bias toward basic and acidic residues. The segment covering 342–354 (CNSQGRSEAQQPI) has biased composition (polar residues). Phosphoserine occurs at positions 348, 360, 367, and 372. The segment covering 363–375 (ARTSSLPESSPSK) has biased composition (polar residues). One can recognise an LIM zinc-binding domain in the interval 386 to 446 (ESCVECQKTV…KPHFNQLFKS (61 aa)). Lys-437 bears the N6-succinyllysine mark. 2 disordered regions span residues 468-493 (ENEE…GVED) and 505-714 (SMEA…DTTT). At Ser-488 the chain carries Phosphoserine. The required for interaction with MYO5B stretch occupies residues 491-511 (VEDAPIAKVGVLAASMEAKAS). Composition is skewed to basic and acidic residues over residues 512–526 (SQRE…ETKK) and 555–566 (WPPEDEVCKTEA). Over residues 599–611 (SSVKSPKPLSPSL) the composition is skewed to low complexity. Phosphoserine occurs at positions 600, 603, 608, and 616. 2 stretches are compositionally biased toward basic and acidic residues: residues 638 to 653 (RPSR…RWQS) and 662 to 673 (EAPRGRDGRSFE). Residues Ser-697, Ser-722, and Ser-737 each carry the phosphoserine modification.

In terms of assembly, interacts with NPC1L1; bridges NPC1L1 with MYO5B. Interacts with MYO5B; bridges MYO5B with NPC1L1. Interacts with PXN; this complex stabilizes actin dynamics. Interacts with F-actin and G-actin. Interacts with LUZP1 (via C-terminus); both proteins restrict ciliation and may work together to regulate this process. Binds RAB40B (GTP-bound); interaction influences LIMA1 subcellular localization in lamellipodia during cell migration. Post-translationally, phosphorylation of the C-terminal region by MAPK1/MAPK3 reduces its association with F-actin and contributes to actin filament reorganization and enhanced cell motility. Ubiquitinated by the ECS(RAB40B) complex leading to its degradation. Expressed throughout the kidney, including renal cortex, medulla, and glomeruli. Expressed in glomeruli, tubular epithelial cells, and extraglomerular vascular endothelial cells (at protein level).

The protein localises to the cytoplasm. It localises to the cell junction. It is found in the focal adhesion. Its subcellular location is the cytoskeleton. The protein resides in the stress fiber. The protein localises to the cell membrane. It localises to the cell projection. It is found in the ruffle. Its subcellular location is the lamellipodium. Actin-binding protein involved in actin cytoskeleton regulation and dynamics. Increases the number and size of actin stress fibers and inhibits membrane ruffling. Inhibits actin filament depolymerization. Bundles actin filaments, delays filament nucleation and reduces formation of branched filaments. Acts as a negative regulator of primary cilium formation. Plays a role in cholesterol homeostasis. Influences plasma cholesterol levels through regulation of intestinal cholesterol absorption. May act as a scaffold protein by regulating NPC1L1 transportation, an essential protein for cholesterol absorption, to the plasma membrane by recruiting MYO5B to NPC1L1, and thus facilitates cholesterol uptake. This Rattus norvegicus (Rat) protein is LIM domain and actin-binding protein 1.